A 169-amino-acid polypeptide reads, in one-letter code: Putative tRNA (cytidine(34)-2'-O)-methyltransferase (169 aa).

The S-adenosyl-L-methionine site is built by Val-79, Gly-104, Ile-125, and Ser-134.

It belongs to the class IV-like SAM-binding methyltransferase superfamily. RNA methyltransferase TrmH family. TrmL subfamily.

The protein localises to the cytoplasm. The enzyme catalyses cytidine(34) in tRNA + S-adenosyl-L-methionine = 2'-O-methylcytidine(34) in tRNA + S-adenosyl-L-homocysteine + H(+). It catalyses the reaction 5-carboxymethylaminomethyluridine(34) in tRNA(Leu) + S-adenosyl-L-methionine = 5-carboxymethylaminomethyl-2'-O-methyluridine(34) in tRNA(Leu) + S-adenosyl-L-homocysteine + H(+). Its function is as follows. Could methylate the ribose at the nucleotide 34 wobble position in tRNA. This Lactococcus lactis subsp. cremoris (strain MG1363) protein is Putative tRNA (cytidine(34)-2'-O)-methyltransferase.